The following is a 200-amino-acid chain: Large ribosomal subunit protein uL4 (200 aa).

The tract at residues Thr-42–Gly-65 is disordered.

This sequence belongs to the universal ribosomal protein uL4 family. Part of the 50S ribosomal subunit.

One of the primary rRNA binding proteins, this protein initially binds near the 5'-end of the 23S rRNA. It is important during the early stages of 50S assembly. It makes multiple contacts with different domains of the 23S rRNA in the assembled 50S subunit and ribosome. Functionally, forms part of the polypeptide exit tunnel. This Vibrio vulnificus (strain CMCP6) protein is Large ribosomal subunit protein uL4.